The following is a 78-amino-acid chain: Small ribosomal subunit protein bS16c (78 aa).

The protein belongs to the bacterial ribosomal protein bS16 family.

It localises to the plastid. The protein localises to the chloroplast. The sequence is that of Small ribosomal subunit protein bS16c from Panax ginseng (Korean ginseng).